Reading from the N-terminus, the 452-residue chain is Probable carboxypeptidase ACLA_088580 (452 aa).

The first 18 residues, 1-18 (MRSLTLLLSLSTALRSVA), serve as a signal peptide directing secretion. Residues Asn-107 and Asn-156 are each glycosylated (N-linked (GlcNAc...) asparagine). Asp-175 is a Zn(2+) binding site. Catalysis depends on Glu-207, which acts as the Proton acceptor. Residue Glu-208 participates in Zn(2+) binding.

This sequence belongs to the peptidase M20A family. Zn(2+) is required as a cofactor.

It is found in the secreted. This Aspergillus clavatus (strain ATCC 1007 / CBS 513.65 / DSM 816 / NCTC 3887 / NRRL 1 / QM 1276 / 107) protein is Probable carboxypeptidase ACLA_088580.